The primary structure comprises 300 residues: Lysenin-related protein 1 (300 aa).

An N-terminal cap domain region spans residues 12-35 (EEIEVDVVSVWKEGYAYENRGNSS). The beta-hairpin domain stretch occupies residues 36–109 (VQQKITMTKG…SQVIEHTVTI (74 aa)). Residues 110 to 158 (PPNKKFTRWKLNADVGGTGIEYMYLIDEVTAIGADLTIPEVNKSRAKIL) are N-terminal cap domain. The tract at residues 159–299 (VGRQIHLGET…EDKWILEVVN (141 aa)) is C-terminal receptor-binding domain. Lysine 187, serine 229, tyrosine 235, and tyrosine 284 together coordinate an N-(acyl)-sphingosylphosphocholine. Cysteine 274 and cysteine 285 are disulfide-bonded.

The protein belongs to the lysenin family. In terms of assembly, binds to sphingomyelin as a monomer by using its C-terminal domain. Forms a nonamer when sphingomyelin/LRP-1 ratio is lower than ca 500. Oligomerization, but not binding, is influenced by the fluidity of sphingomyelin. In terms of tissue distribution, expressed by coelomocytes.

It localises to the secreted. The protein resides in the target cell membrane. Its function is as follows. Pore-forming toxin that specifically binds sphingomyelin in the plasma membrane of various cells. Has hemolytic activity. Binding and hemolytic activities of this toxin are 10 times less than those of lysenin and lysenin-related protein 2. The sequence is that of Lysenin-related protein 1 from Eisenia fetida (Red wiggler worm).